We begin with the raw amino-acid sequence, 214 residues long: Probable septum site-determining protein MinC (214 aa).

The protein belongs to the MinC family. In terms of assembly, interacts with MinD and FtsZ.

In terms of biological role, cell division inhibitor that blocks the formation of polar Z ring septums. Rapidly oscillates between the poles of the cell to destabilize FtsZ filaments that have formed before they mature into polar Z rings. Prevents FtsZ polymerization. This chain is Probable septum site-determining protein MinC, found in Thermoanaerobacter pseudethanolicus (strain ATCC 33223 / 39E) (Clostridium thermohydrosulfuricum).